Consider the following 350-residue polypeptide: Nicotinate-nucleotide--dimethylbenzimidazole phosphoribosyltransferase (350 aa).

Glu318 serves as the catalytic Proton acceptor.

This sequence belongs to the CobT family.

It carries out the reaction 5,6-dimethylbenzimidazole + nicotinate beta-D-ribonucleotide = alpha-ribazole 5'-phosphate + nicotinate + H(+). It functions in the pathway nucleoside biosynthesis; alpha-ribazole biosynthesis; alpha-ribazole from 5,6-dimethylbenzimidazole: step 1/2. Catalyzes the synthesis of alpha-ribazole-5'-phosphate from nicotinate mononucleotide (NAMN) and 5,6-dimethylbenzimidazole (DMB). This Citrifermentans bemidjiense (strain ATCC BAA-1014 / DSM 16622 / JCM 12645 / Bem) (Geobacter bemidjiensis) protein is Nicotinate-nucleotide--dimethylbenzimidazole phosphoribosyltransferase.